We begin with the raw amino-acid sequence, 265 residues long: Undecaprenyl-diphosphatase (265 aa).

Transmembrane regions (helical) follow at residues 38–58, 75–95, 108–128, 135–155, 181–201, 215–235, and 244–264; these read RSDF…CLAL, RDYV…GLIV, PVAW…HFAG, VVTW…GVFP, FVFM…LLEM, VAVA…WLLG, and VFAV…PAAA.

This sequence belongs to the UppP family.

It localises to the cell inner membrane. It carries out the reaction di-trans,octa-cis-undecaprenyl diphosphate + H2O = di-trans,octa-cis-undecaprenyl phosphate + phosphate + H(+). Functionally, catalyzes the dephosphorylation of undecaprenyl diphosphate (UPP). Confers resistance to bacitracin. The protein is Undecaprenyl-diphosphatase of Xanthomonas axonopodis pv. citri (strain 306).